A 131-amino-acid polypeptide reads, in one-letter code: Glycine cleavage system H protein (131 aa).

The region spanning Thr24 to Arg106 is the Lipoyl-binding domain. At Lys65 the chain carries N6-lipoyllysine.

Belongs to the GcvH family. As to quaternary structure, the glycine cleavage system is composed of four proteins: P, T, L and H. It depends on (R)-lipoate as a cofactor.

The glycine cleavage system catalyzes the degradation of glycine. The H protein shuttles the methylamine group of glycine from the P protein to the T protein. The protein is Glycine cleavage system H protein of Mycolicibacterium smegmatis (strain ATCC 700084 / mc(2)155) (Mycobacterium smegmatis).